The sequence spans 465 residues: Cysteine--tRNA ligase (465 aa).

Residue Cys30 participates in Zn(2+) binding. The 'HIGH' region signature appears at 32-42; it reads ITVYDYCHVGH. Residues Cys214, His239, and Glu243 each contribute to the Zn(2+) site. The 'KMSKS' region signature appears at 271-275; the sequence is KMSKS. Lys274 lines the ATP pocket.

This sequence belongs to the class-I aminoacyl-tRNA synthetase family. In terms of assembly, monomer. Zn(2+) serves as cofactor.

The protein resides in the cytoplasm. It carries out the reaction tRNA(Cys) + L-cysteine + ATP = L-cysteinyl-tRNA(Cys) + AMP + diphosphate. The protein is Cysteine--tRNA ligase of Burkholderia orbicola (strain MC0-3).